Here is a 486-residue protein sequence, read N- to C-terminus: tRNA (uracil-5-)-methyltransferase homolog B (486 aa).

S-adenosyl-L-methionine is bound by residues Gln-305, Glu-355, and Asn-405. Cys-433 acts as the Nucleophile in catalysis. Glu-479 acts as the Proton acceptor in catalysis.

This sequence belongs to the class I-like SAM-binding methyltransferase superfamily. RNA M5U methyltransferase family.

The protein resides in the mitochondrion matrix. The catalysed reaction is uridine(54) in tRNA + S-adenosyl-L-methionine = 5-methyluridine(54) in tRNA + S-adenosyl-L-homocysteine + H(+). It carries out the reaction a uridine in 12S rRNA + S-adenosyl-L-methionine = a 5-methyluridine in 12S rRNA + S-adenosyl-L-homocysteine + H(+). In terms of biological role, mitochondrial S-adenosyl-L-methionine-dependent methyltransferase that catalyzes the formation of 5-methyl-uridine in tRNAs and 12S rRNA. Catalyzes the methylation of uridine at position 54 (m5U54) in all tRNAs. Specifically methylates the uridine in position 429 of 12S rRNA (m5U429). Does not affect RNA stability or mitochondrial translation. In Pongo abelii (Sumatran orangutan), this protein is tRNA (uracil-5-)-methyltransferase homolog B (TRMT2B).